Here is a 178-residue protein sequence, read N- to C-terminus: ASSKEIAEAIGIDSATVRRDFSYFGELGRRGFGYNVKELMDFFADILNDTSITNVMLVGVGNMGRALLHYRFHERNKMKIVMAFEADDNPAVGTTDENIPIHAISEIKERISEANSQTAILTVPSVKAQEVTDILVEAGVKGILSFSPVNLSVPKDVVVQYVDLTSELQTLLYFMRKG.

59-64 (GVGNMG) lines the NAD(+) pocket.

It belongs to the transcriptional regulatory Rex family. As to quaternary structure, homodimer.

The protein localises to the cytoplasm. In terms of biological role, modulates transcription in response to changes in cellular NADH/NAD(+) redox state. This is Redox-sensing transcriptional repressor Rex from Streptococcus suis.